The chain runs to 204 residues: MIDIAKEHKVNEQIRVRQIRLIGAEGEQIGIIDTRDALAMAREKGLDLVMVSPQAVPPVCRLLDYGRFRYEQQQNEKENRKRARAQEVKAIKFRVKIDDHDFNTKTGHVRRFLEEGHKVKVTIMFRGRERTHPELGERILHRVAETLADIGAPEGMPSMMGMDMNMIMVPKAAPKRDSGRSESAQEAPTARSAEASRPEAPANA.

The segment at 169–204 (VPKAAPKRDSGRSESAQEAPTARSAEASRPEAPANA) is disordered.

It belongs to the IF-3 family. As to quaternary structure, monomer.

Its subcellular location is the cytoplasm. In terms of biological role, IF-3 binds to the 30S ribosomal subunit and shifts the equilibrium between 70S ribosomes and their 50S and 30S subunits in favor of the free subunits, thus enhancing the availability of 30S subunits on which protein synthesis initiation begins. This Deinococcus geothermalis (strain DSM 11300 / CIP 105573 / AG-3a) protein is Translation initiation factor IF-3.